The following is a 243-amino-acid chain: MDGFDRSNAPVEYQRVEWISDIFVFGMGVCWLINYAGMIYTSLQEQTYSMAPLALCCNFAWEMVYGLIYPSKSRIEQGVFLAGLVVNLGVMYTAIRFAPNEWAHAPLVMNNITLIFALGVLGSLTGHLALAAEIGPALGYSWGAVACQLLLSVGGFCQLLGRSSSRGASYTLWLSRFIGSGCVVGFAILRYMYWSEAFNWLNSPLVLWSLGVFIAVDSLYGICLWNVKKYEHGQERSNARKAQ.

3 helical membrane passes run 19-39, 50-70, and 75-95; these read ISDI…AGMI, MAPL…LIYP, and IEQG…YTAI. A glycan (N-linked (GlcNAc...) asparagine) is linked at Asn-111. 4 consecutive transmembrane segments (helical) span residues 112–132, 134–154, 169–189, and 205–225; these read ITLI…ALAA, IGPA…LSVG, SYTL…FAIL, and LVLW…ICLW.

It belongs to the paxB family.

Its subcellular location is the membrane. It functions in the pathway secondary metabolite biosynthesis. In terms of biological role, terpene cyclase; part of the gene cluster that mediates the biosynthesis of the indole diterpenes nodulisporic acids (NA). Nodulisporic acid A (NAA) and its chemically modified derivatives are of particular significance because of their highly potent insecticidal activity against blood-feeding arthropods and lack of observable adverse effects on mammals, in particular the tremogenicity associated with the paspaline-derived IDTs is not observed. The geranylgeranyl diphosphate (GGPP) synthase ggs1, localized outside of the cluster, is proposed to catalyze the first step in nodulisporic acid biosynthesis via conversion of farnesyl pyrophosphate and isopentyl pyrophosphate into geranylgeranyl pyrophosphate (GGPP). Condensation of indole-3-glycerol phosphate with GGPP by the prenyl transferase nodC then forms 3-geranylgeranylindole (3-GGI). Epoxidation by the FAD-dependent monooxygenase nodM leads to a single-epoxidized-GGI that is substrate of the terpene cyclase nodB for cyclization to yield emindole SB. The terminal methyl carbon, C28, of emindole SB is then oxidized by the cytochrome P450 monooxygenase nodW to produce nodulisporic acid F (NAF), the pentacyclic core of NAA. NAF is converted to nodulisporic acid E (NAE) via prenylation. This step is probably performed by one of the indole diterpene prenyltransferases nodD1 or nodD2. Several oxidation steps performed by the FAD-linked oxidoreductase nodO and one of the cytochrome P450 monooxygenase nodR, nodX or nodZ further convert NAE to nodulisporic acid D (NAD). NAD is substrate of cytochrome P450 monooxygenase nodJ to produce the precursor of nodulisporic acid C (NAC), converted to NAC by one of the indole diterpene prenyltransferases nodD1 or nodD2. The FAD-dependent monooxygenase nodY2 then oxidizes NAC to nodulisporic acid B (NAB). Finally NAB is converted to NAA by one of the cytochrome P450 monooxygenases nodR, nodX or nodZ. This chain is Terpene cyclase nodB, found in Hypoxylon pulicicidum.